A 243-amino-acid chain; its full sequence is Pyridoxine 5'-phosphate synthase (243 aa).

Asn9 is a 3-amino-2-oxopropyl phosphate binding site. Residue 11–12 (DH) coordinates 1-deoxy-D-xylulose 5-phosphate. Residue Arg20 coordinates 3-amino-2-oxopropyl phosphate. The active-site Proton acceptor is the His45. 1-deoxy-D-xylulose 5-phosphate is bound by residues Arg47 and His52. Glu72 acts as the Proton acceptor in catalysis. Thr102 provides a ligand contact to 1-deoxy-D-xylulose 5-phosphate. Catalysis depends on His193, which acts as the Proton donor. 3-amino-2-oxopropyl phosphate-binding positions include Gly194 and 215 to 216 (GH).

The protein belongs to the PNP synthase family. As to quaternary structure, homooctamer; tetramer of dimers.

Its subcellular location is the cytoplasm. It carries out the reaction 3-amino-2-oxopropyl phosphate + 1-deoxy-D-xylulose 5-phosphate = pyridoxine 5'-phosphate + phosphate + 2 H2O + H(+). It functions in the pathway cofactor biosynthesis; pyridoxine 5'-phosphate biosynthesis; pyridoxine 5'-phosphate from D-erythrose 4-phosphate: step 5/5. Catalyzes the complicated ring closure reaction between the two acyclic compounds 1-deoxy-D-xylulose-5-phosphate (DXP) and 3-amino-2-oxopropyl phosphate (1-amino-acetone-3-phosphate or AAP) to form pyridoxine 5'-phosphate (PNP) and inorganic phosphate. The chain is Pyridoxine 5'-phosphate synthase from Shigella sonnei (strain Ss046).